The following is a 496-amino-acid chain: UDP-glycosyltransferase 84A2 (496 aa).

His-23 acts as the Proton acceptor in catalysis. His-23 serves as a coordination point for an anthocyanidin. The UDP-alpha-D-glucose site is built by Gln-352, His-367, Trp-370, Asn-371, Ser-372, and Glu-375. Gly-390 provides a ligand contact to an anthocyanidin. Residues Asp-391 and Gln-392 each coordinate UDP-alpha-D-glucose.

The protein belongs to the UDP-glycosyltransferase family. Expressed in roots, cotyledons, leaf veins and trichomes.

The catalysed reaction is (E)-sinapate + UDP-alpha-D-glucose = 1-O-(trans-sinapoyl)-beta-D-glucose + UDP. Functionally, sinapate glucosyltransferase (SGT) required for the biosynthesis of the glucose ester sinapoylglucose and subsequently sinapoylmalate and sinapoylcholine. Is the major SGT activity in plant. Plays an important role in sinapoylation of anthocyanins. Sinapoylglucose produced by UGT84A2 is a significant source of sinapoyl moieties for anthocyanins. Indole-3-butyric acid (IBA)-specific glucosyltransferase that catalyzes the glucosylation of the auxin IBA, but not indole-3-acetic acid (IAA). May be involved in flowering regulation through IBA-mediated transcriptional repression of the auxin-response factors ARF6 and ARF8 and downstream flowering pathway genes. Can glucosylate the phytotoxic xenobiotic compound 2,4,5-trichlorophenol (TCP). The protein is UDP-glycosyltransferase 84A2 of Arabidopsis thaliana (Mouse-ear cress).